A 285-amino-acid chain; its full sequence is Ribosomal RNA small subunit methyltransferase A (285 aa).

S-adenosyl-L-methionine contacts are provided by Asn-21, Leu-23, Gly-48, Glu-69, Asp-94, and Asn-127.

This sequence belongs to the class I-like SAM-binding methyltransferase superfamily. rRNA adenine N(6)-methyltransferase family. RsmA subfamily.

It is found in the cytoplasm. It catalyses the reaction adenosine(1518)/adenosine(1519) in 16S rRNA + 4 S-adenosyl-L-methionine = N(6)-dimethyladenosine(1518)/N(6)-dimethyladenosine(1519) in 16S rRNA + 4 S-adenosyl-L-homocysteine + 4 H(+). Specifically dimethylates two adjacent adenosines (A1518 and A1519) in the loop of a conserved hairpin near the 3'-end of 16S rRNA in the 30S particle. May play a critical role in biogenesis of 30S subunits. The sequence is that of Ribosomal RNA small subunit methyltransferase A from Koribacter versatilis (strain Ellin345).